The chain runs to 69 residues: Alpha-conotoxin SrIA/SrIB (69 aa).

The signal sequence occupies residues M1 to S21. Positions F22 to R48 are excised as a propeptide. Cystine bridges form between C51–C57 and C52–C65. Residues S53–P55 form a ser-Xaa-Pro motif, crucial for potent interaction with nAChR region. P55 is modified (4-hydroxyproline; in form Sr1A and Sr1B). 4-carboxyglutamate; in form Sr1A is present on E60. E63 is subject to 4-carboxyglutamate; in form Sr1A and Sr1B. At G66 the chain carries Glycine amide; in form Sr1A and Sr1B.

The protein belongs to the conotoxin A superfamily. In terms of processing, occurs in 2 forms which differ in the post-translational modification of Glu-60. In form SrA1 Glu-60 is 4-carboxyglutamate while in form SrA2 Glu-60 is unmodified. In terms of tissue distribution, expressed by the venom duct.

Its subcellular location is the secreted. Alpha-conotoxins act on postsynaptic membranes, they bind to the nicotinic acetylcholine receptors (nAChR) and thus inhibit them. Has weak blocking effects on muscle nAChR composed of alpha-1/beta-1/gamma/delta subunits and the central nervous system nAChR composed of alpha-4/beta-2 subunits. Does not detectably affect the peripheral nervous system nAChR composed of alpha-3/beta-4 subunits. Low toxin concentrations potentiate currents in muscle nAChR composed of alpha-1/beta-1/gamma/delta subunits and central nervous system nAChR composed of alpha-4/beta-2 subunits, but not the peripheral nervous system nAChR composed of alpha-3/beta-4 subunits. The polypeptide is Alpha-conotoxin SrIA/SrIB (Conus spurius (Alphabet cone)).